The sequence spans 158 residues: Large ribosomal subunit protein uL13 (158 aa).

Residues 129–158 (PEHGHHAQKPVALDFGAMNNKNGRGNNAGR) are disordered. The span at 144–158 (GAMNNKNGRGNNAGR) shows a compositional bias: low complexity.

Belongs to the universal ribosomal protein uL13 family. Part of the 50S ribosomal subunit.

This protein is one of the early assembly proteins of the 50S ribosomal subunit, although it is not seen to bind rRNA by itself. It is important during the early stages of 50S assembly. This is Large ribosomal subunit protein uL13 from Anaplasma phagocytophilum (strain HZ).